A 58-amino-acid polypeptide reads, in one-letter code: Small ribosomal subunit protein bS21 (58 aa).

Positions 27 to 58 (GVLSEARKHEHYEKPSVKRKKKSEAARKRKFK) are disordered. Residues 31 to 42 (EARKHEHYEKPS) show a composition bias toward basic and acidic residues. Residues 43-58 (VKRKKKSEAARKRKFK) are compositionally biased toward basic residues.

The protein belongs to the bacterial ribosomal protein bS21 family.

The chain is Small ribosomal subunit protein bS21 from Desulfitobacterium hafniense (strain DSM 10664 / DCB-2).